The sequence spans 80 residues: RNA-binding protein Hfq (80 aa).

One can recognise a Sm domain in the interval 10–69 (DPFLNALRKEHVPVSIYLVNGIKLQGNIESFDQYVVLLRNTVTQMVYKHAISTVVPARPV).

It belongs to the Hfq family. As to quaternary structure, homohexamer.

RNA chaperone that binds small regulatory RNA (sRNAs) and mRNAs to facilitate mRNA translational regulation in response to envelope stress, environmental stress and changes in metabolite concentrations. Also binds with high specificity to tRNAs. The protein is RNA-binding protein Hfq of Burkholderia ambifaria (strain ATCC BAA-244 / DSM 16087 / CCUG 44356 / LMG 19182 / AMMD) (Burkholderia cepacia (strain AMMD)).